Reading from the N-terminus, the 410-residue chain is Peptidase T (410 aa).

Residue His79 coordinates Zn(2+). Asp81 is an active-site residue. A Zn(2+)-binding site is contributed by Asp142. Residue Glu176 is the Proton acceptor of the active site. Zn(2+) contacts are provided by Glu177, Asp199, and His381.

Belongs to the peptidase M20B family. Zn(2+) is required as a cofactor.

It localises to the cytoplasm. The catalysed reaction is Release of the N-terminal residue from a tripeptide.. Its function is as follows. Cleaves the N-terminal amino acid of tripeptides. The chain is Peptidase T from Bacillus anthracis (strain A0248).